The chain runs to 424 residues: Light-independent protochlorophyllide reductase subunit N (424 aa).

Residues C27, C52, and C113 each contribute to the [4Fe-4S] cluster site.

The protein belongs to the BchN/ChlN family. As to quaternary structure, protochlorophyllide reductase is composed of three subunits; BchL, BchN and BchB. Forms a heterotetramer of two BchB and two BchN subunits. Requires [4Fe-4S] cluster as cofactor.

The catalysed reaction is chlorophyllide a + oxidized 2[4Fe-4S]-[ferredoxin] + 2 ADP + 2 phosphate = protochlorophyllide a + reduced 2[4Fe-4S]-[ferredoxin] + 2 ATP + 2 H2O. It participates in porphyrin-containing compound metabolism; bacteriochlorophyll biosynthesis (light-independent). Its function is as follows. Component of the dark-operative protochlorophyllide reductase (DPOR) that uses Mg-ATP and reduced ferredoxin to reduce ring D of protochlorophyllide (Pchlide) to form chlorophyllide a (Chlide). This reaction is light-independent. The NB-protein (BchN-BchB) is the catalytic component of the complex. The protein is Light-independent protochlorophyllide reductase subunit N of Halorhodospira halophila (strain DSM 244 / SL1) (Ectothiorhodospira halophila (strain DSM 244 / SL1)).